The following is a 465-amino-acid chain: Glutamate--tRNA ligase 1 (465 aa).

The 'HIGH' region motif lies at 8–18 (PSPTGNLHIGG). A 'KMSKS' region motif is present at residues 236 to 240 (KLSKR). Lysine 239 is a binding site for ATP.

Belongs to the class-I aminoacyl-tRNA synthetase family. Glutamate--tRNA ligase type 1 subfamily. As to quaternary structure, monomer.

It is found in the cytoplasm. It carries out the reaction tRNA(Glu) + L-glutamate + ATP = L-glutamyl-tRNA(Glu) + AMP + diphosphate. Functionally, catalyzes the attachment of glutamate to tRNA(Glu) in a two-step reaction: glutamate is first activated by ATP to form Glu-AMP and then transferred to the acceptor end of tRNA(Glu). This is Glutamate--tRNA ligase 1 from Wolinella succinogenes (strain ATCC 29543 / DSM 1740 / CCUG 13145 / JCM 31913 / LMG 7466 / NCTC 11488 / FDC 602W) (Vibrio succinogenes).